A 1177-amino-acid polypeptide reads, in one-letter code: Lon protease homolog, mitochondrial (1177 aa).

Disordered stretches follow at residues 72 to 197 (RTNS…KSPA) and 353 to 386 (AKKAKSGKTEDSKHDSKVTSKDGKETTEKYDSST). The segment covering 103-150 (RGRELWVQEKDKSDKPEKSDKPDKTDKTDKDKPEKQDKDKTDKPEKTK) has biased composition (basic and acidic residues). Residues 154–182 (TPSSTASTGAGEAAAPPSAPPSGSGSSSS) show a composition bias toward low complexity. In terms of domain architecture, Lon N-terminal spans 203–505 (ILAVPISDRP…RALILLKREH (303 aa)). Basic and acidic residues predominate over residues 353–383 (AKKAKSGKTEDSKHDSKVTSKDGKETTEKYD). An ATP-binding site is contributed by 657–664 (GPPGVGKT). Basic and acidic residues predominate over residues 883–916 (EKDKESAEKKTTKSKSKEVNEEPAAKEEKDKATE). The tract at residues 883-932 (EKDKESAEKKTTKSKSKEVNEEPAAKEEKDKATESAESSETKVGTKAPPV) is disordered. One can recognise a Lon proteolytic domain in the interval 964–1150 (DPPPGVVMGL…QDVYDVVFQG (187 aa)). Active-site residues include Ser1056 and Lys1099.

This sequence belongs to the peptidase S16 family. Homohexamer or homoheptamer. Organized in a ring with a central cavity.

The protein localises to the mitochondrion matrix. The catalysed reaction is Hydrolysis of proteins in presence of ATP.. In terms of biological role, ATP-dependent serine protease that mediates the selective degradation of misfolded, unassembled or oxidatively damaged polypeptides as well as certain short-lived regulatory proteins in the mitochondrial matrix. May also have a chaperone function in the assembly of inner membrane protein complexes. Participates in the regulation of mitochondrial gene expression and in the maintenance of the integrity of the mitochondrial genome. Binds to mitochondrial DNA in a site-specific manner. The polypeptide is Lon protease homolog, mitochondrial (Yarrowia lipolytica (strain CLIB 122 / E 150) (Yeast)).